Reading from the N-terminus, the 212-residue chain is ATP phosphoribosyltransferase 2 (212 aa).

It belongs to the ATP phosphoribosyltransferase family. Short subfamily. As to quaternary structure, heteromultimer composed of HisG and HisZ subunits.

It localises to the cytoplasm. It catalyses the reaction 1-(5-phospho-beta-D-ribosyl)-ATP + diphosphate = 5-phospho-alpha-D-ribose 1-diphosphate + ATP. It participates in amino-acid biosynthesis; L-histidine biosynthesis; L-histidine from 5-phospho-alpha-D-ribose 1-diphosphate: step 1/9. Functionally, catalyzes the condensation of ATP and 5-phosphoribose 1-diphosphate to form N'-(5'-phosphoribosyl)-ATP (PR-ATP). Has a crucial role in the pathway because the rate of histidine biosynthesis seems to be controlled primarily by regulation of HisG enzymatic activity. The sequence is that of ATP phosphoribosyltransferase 2 (hisG2) from Geobacter sulfurreducens (strain ATCC 51573 / DSM 12127 / PCA).